We begin with the raw amino-acid sequence, 45 residues long: Thymosin beta (45 aa).

The tract at residues 1 to 45 (MADKPNMTEITSFDKTKLRKTETQEKNPLPTKETIEQERQGESTP) is disordered. Composition is skewed to basic and acidic residues over residues 12 to 25 (SFDKTKLRKTETQE) and 33 to 45 (ETIEQERQGESTP).

This sequence belongs to the thymosin beta family.

The protein localises to the cytoplasm. It localises to the cytoskeleton. In terms of biological role, plays an important role in the organization of the cytoskeleton. Binds to and sequesters actin monomers (G actin) and therefore inhibits actin polymerization. The protein is Thymosin beta (tmsb) of Danio rerio (Zebrafish).